Reading from the N-terminus, the 1167-residue chain is Pesticidal crystal protein Cry21Aa (1167 aa).

The protein belongs to the delta endotoxin family.

Its function is as follows. Endotoxin with nematicidal activity. The sequence is that of Pesticidal crystal protein Cry21Aa (cry21Aa) from Bacillus thuringiensis.